The sequence spans 502 residues: Bone morphogenetic protein receptor type-1B (502 aa).

Positions Met1 to Thr13 are cleaved as a signal peptide. Residues Met1–Pro25 form a disordered region. Topologically, residues Lys14–Arg126 are extracellular. Intrachain disulfides connect Cys32/Cys53, Cys34/Cys38, Cys47/Cys71, Cys81/Cys95, and Cys96/Cys102. Residues Ala127–Phe148 form a helical membrane-spanning segment. Residues Arg149–Leu502 are Cytoplasmic-facing. Residues Glu174–Gln203 enclose the GS domain. A Protein kinase domain is found at Ile204 to Met494. Residues Ile210–Val218 and Lys231 each bind ATP. Residue Asp332 is the Proton acceptor of the active site.

The protein belongs to the protein kinase superfamily. TKL Ser/Thr protein kinase family. TGFB receptor subfamily. Interacts with high affinity with GDF5; positively regulates chondrocyte differentiation. Interacts with SCUBE3. Interacts with TSC22D1/TSC-22. Interacts with TGFBR3. Mg(2+) is required as a cofactor. The cofactor is Mn(2+). Post-translationally, autophosphorylated.

The protein resides in the cell membrane. The catalysed reaction is L-threonyl-[receptor-protein] + ATP = O-phospho-L-threonyl-[receptor-protein] + ADP + H(+). It catalyses the reaction L-seryl-[receptor-protein] + ATP = O-phospho-L-seryl-[receptor-protein] + ADP + H(+). On ligand binding, forms a receptor complex consisting of two type II and two type I transmembrane serine/threonine kinases. Type II receptors phosphorylate and activate type I receptors which autophosphorylate, then bind and activate SMAD transcriptional regulators. Receptor for BMP7/OP-1 and GDF5. Positively regulates chondrocyte differentiation through GDF5 interaction. This chain is Bone morphogenetic protein receptor type-1B (BMPR1B), found in Homo sapiens (Human).